A 249-amino-acid polypeptide reads, in one-letter code: Type III pantothenate kinase (249 aa).

Position 6 to 13 (6 to 13 (DAGNSRIK)) interacts with ATP. Residues Phe77 and 98 to 101 (GVDR) each bind substrate. Asp100 acts as the Proton acceptor in catalysis. Asp121 lines the K(+) pocket. Ser124 lines the ATP pocket. Position 177 (Thr177) interacts with substrate.

It belongs to the type III pantothenate kinase family. As to quaternary structure, homodimer. The cofactor is NH4(+). K(+) serves as cofactor.

Its subcellular location is the cytoplasm. It carries out the reaction (R)-pantothenate + ATP = (R)-4'-phosphopantothenate + ADP + H(+). Its pathway is cofactor biosynthesis; coenzyme A biosynthesis; CoA from (R)-pantothenate: step 1/5. Functionally, catalyzes the phosphorylation of pantothenate (Pan), the first step in CoA biosynthesis. In Teredinibacter turnerae (strain ATCC 39867 / T7901), this protein is Type III pantothenate kinase.